We begin with the raw amino-acid sequence, 827 residues long: Periplasmic nitrate reductase (827 aa).

Residues 1–34 constitute a signal peptide (tat-type signal); the sequence is MSLTRRDFIKANAVPATAAAAGLATPAIAQPAKA. The 4Fe-4S Mo/W bis-MGD-type domain occupies 36–92; it reads IRWDKGVCRFCGTGCSVLVGVQDGRVVATQGDPDSPVNRGLNCIKGYFLSKIMYGED. The [4Fe-4S] cluster site is built by Cys-43, Cys-46, Cys-50, and Cys-78. Residues Lys-80, Gln-148, Asn-173, Cys-177, 210–217, 241–245, 260–262, Met-371, Gln-375, Asn-481, 507–508, Lys-530, Asp-557, and 717–726 contribute to the Mo-bis(molybdopterin guanine dinucleotide) site; these read WGSNMAEM, STFEH, QTD, SD, and TGRVLEHWHS. Phe-793 contributes to the substrate binding site. Positions 801 and 818 each coordinate Mo-bis(molybdopterin guanine dinucleotide).

The protein belongs to the prokaryotic molybdopterin-containing oxidoreductase family. NasA/NapA/NarB subfamily. As to quaternary structure, component of the periplasmic nitrate reductase NapAB complex composed of NapA and NapB. Requires [4Fe-4S] cluster as cofactor. Mo-bis(molybdopterin guanine dinucleotide) serves as cofactor. In terms of processing, predicted to be exported by the Tat system. The position of the signal peptide cleavage has not been experimentally proven.

It is found in the periplasm. The catalysed reaction is 2 Fe(II)-[cytochrome] + nitrate + 2 H(+) = 2 Fe(III)-[cytochrome] + nitrite + H2O. Its function is as follows. Catalytic subunit of the periplasmic nitrate reductase complex NapAB. Receives electrons from NapB and catalyzes the reduction of nitrate to nitrite. The sequence is that of Periplasmic nitrate reductase from Paramagnetospirillum magnetotacticum (Aquaspirillum magnetotacticum).